The primary structure comprises 33 residues: Photosystem II reaction center protein T (33 aa).

Residues 3–23 traverse the membrane as a helical segment; the sequence is ALVYTFLLVSTLGILFFSIFF.

Belongs to the PsbT family. As to quaternary structure, PSII is composed of 1 copy each of membrane proteins PsbA, PsbB, PsbC, PsbD, PsbE, PsbF, PsbH, PsbI, PsbJ, PsbK, PsbL, PsbM, PsbT, PsbY, PsbZ, Psb30/Ycf12, at least 3 peripheral proteins of the oxygen-evolving complex and a large number of cofactors. It forms dimeric complexes.

The protein resides in the plastid. It localises to the chloroplast thylakoid membrane. Functionally, found at the monomer-monomer interface of the photosystem II (PS II) dimer, plays a role in assembly and dimerization of PSII. PSII is a light-driven water plastoquinone oxidoreductase, using light energy to abstract electrons from H(2)O, generating a proton gradient subsequently used for ATP formation. The sequence is that of Photosystem II reaction center protein T from Pelargonium hortorum (Common geranium).